Here is a 110-residue protein sequence, read N- to C-terminus: Putative UPF0377 protein YIR040C (110 aa).

Belongs to the UPF0377 family.

In Saccharomyces cerevisiae (strain ATCC 204508 / S288c) (Baker's yeast), this protein is Putative UPF0377 protein YIR040C.